We begin with the raw amino-acid sequence, 295 residues long: MVAKVLDGLAVSAGIFERLHRACCELENNGVCPKLATVLVGNNPASRSYVLSKHRDCNNIGIQSTLIELPANTSEKELISKVEILNASSDVSGIIVQLPLPESIDQNKVIEAINPDKDADGLHPLNLGYLVTGKQGIVPCTPAGIVKLLEAHRITLEGKTIAVIGRGTTVGRPLGILLSGKGVNATVINIHSRSRNISGLSRIADVVVACAGVKHIVEPSWIKPGAVVVDVGINQSGVSSSGKMILTGDVHPLTKNIASYISPVVGGVGPMTRAMLMSNVINLSERDFRKRLYAS.

NADP(+) contacts are provided by residues G165–G167, S192, and I233.

The protein belongs to the tetrahydrofolate dehydrogenase/cyclohydrolase family. Homodimer.

The enzyme catalyses (6R)-5,10-methylene-5,6,7,8-tetrahydrofolate + NADP(+) = (6R)-5,10-methenyltetrahydrofolate + NADPH. The catalysed reaction is (6R)-5,10-methenyltetrahydrofolate + H2O = (6R)-10-formyltetrahydrofolate + H(+). It participates in one-carbon metabolism; tetrahydrofolate interconversion. Functionally, catalyzes the oxidation of 5,10-methylenetetrahydrofolate to 5,10-methenyltetrahydrofolate and then the hydrolysis of 5,10-methenyltetrahydrofolate to 10-formyltetrahydrofolate. The sequence is that of Bifunctional protein FolD from Tropheryma whipplei (strain TW08/27) (Whipple's bacillus).